A 322-amino-acid polypeptide reads, in one-letter code: Probable uridine nucleosidase 2 (322 aa).

Residues Asp14 and His246 contribute to the active site.

The protein belongs to the IUNH family. As to quaternary structure, component of the NSH heterocomplex made of URH1/NSH1 and URH2/NSH2 which exhibits strong xanthosine nucleosidase activity. Interacts with URH1. As to expression, expressed in roots, seedlings and flowers.

Its subcellular location is the cytoplasm. The protein localises to the cytosol. The catalysed reaction is uridine + H2O = D-ribose + uracil. It catalyses the reaction inosine + H2O = hypoxanthine + D-ribose. The enzyme catalyses xanthosine + H2O = D-ribose + xanthine. Involved in pyrimidine breakdown, especially in response to dark stress. In the presence of URH1, exhibits efficient inosine and xanthosine hydrolytic activities. Support inosine breakdown especially during the late phase of senescence. The chain is Probable uridine nucleosidase 2 from Arabidopsis thaliana (Mouse-ear cress).